The following is a 593-amino-acid chain: Autophagy-related protein 22-2 (593 aa).

Residues 42-62 (YGVAAEVFAVCGVGSFLPLTL) form a helical membrane-spanning segment. The N-linked (GlcNAc...) asparagine glycan is linked to Asn-90. A run of 3 helical transmembrane segments spans residues 112 to 132 (SFAM…LVSF), 159 to 179 (LFML…VIGV), and 181 to 201 (CLGS…ANDP). The segment at 228–261 (SWTDEEDTGDHAGPAGSKKAVEPEKASSSTSPEL) is disordered. Transmembrane regions (helical) follow at residues 271 to 291 (GVGL…LLLF), 305 to 325 (LPLR…TVVC), 377 to 397 (VVVF…VSGT), and 415 to 435 (LLSI…PIVA). Asn-443 carries an N-linked (GlcNAc...) asparagine glycan. 4 helical membrane-spanning segments follow: residues 448 to 468 (LCIA…IPFI), 480 to 500 (WEIF…ASYC), 525 to 545 (KGSS…TGSV), and 548 to 568 (GFIF…LVNA).

This sequence belongs to the ATG22 family.

It localises to the vacuole membrane. Functionally, vacuolar effluxer which mediate the efflux of amino acids resulting from autophagic degradation. The release of autophagic amino acids allows the maintenance of protein synthesis and viability during nitrogen starvation. In Emericella nidulans (strain FGSC A4 / ATCC 38163 / CBS 112.46 / NRRL 194 / M139) (Aspergillus nidulans), this protein is Autophagy-related protein 22-2 (atg22-2).